The primary structure comprises 578 residues: Translation initiation factor eIF2B subunit gamma (578 aa).

A phosphoserine mark is found at S296 and S300. Disordered stretches follow at residues 298–337 (QASF…SATS) and 535–578 (DDSV…LFER). T306 bears the Phosphothreonine mark. The span at 544–578 (EIAEETDSDDRSDEDSDDSEYTDEYEYEDDGLFER) shows a compositional bias: acidic residues.

Belongs to the eIF-2B gamma/epsilon subunits family. In terms of assembly, component of the translation initiation factor 2B (eIF2B) complex which is a heterodecamer of two sets of five different subunits: alpha, beta, gamma, delta and epsilon. Subunits alpha, beta and delta comprise a regulatory subcomplex and subunits epsilon and gamma comprise a catalytic subcomplex. Within the complex, the hexameric regulatory complex resides at the center, with the two heterodimeric catalytic subcomplexes bound on opposite sides.

Its subcellular location is the cytoplasm. The protein resides in the cytosol. Functionally, acts as a component of the translation initiation factor 2B (eIF2B) complex, which catalyzes the exchange of GDP for GTP on the eukaryotic initiation factor 2 (eIF2) complex gamma subunit. Its guanine nucleotide exchange factor activity is repressed when bound to eIF2 complex phosphorylated on the alpha subunit, thereby limiting the amount of methionyl-initiator methionine tRNA available to the ribosome and consequently global translation is repressed. It activates the synthesis of GCN4 in yeast under amino acid starvation conditions by suppressing the inhibitory effects of multiple AUG codons present in the leader of GCN4 mRNA. It may promote either repression or activation of GCN4 expression depending on amino acid availability. GCD1 stabilizes the interaction between eIF2 and GCD6 and stimulates the catalytic activity in vitro. This chain is Translation initiation factor eIF2B subunit gamma (GCD1), found in Saccharomyces cerevisiae (strain ATCC 204508 / S288c) (Baker's yeast).